Consider the following 1372-residue polypeptide: DNA-directed RNA polymerase subunit beta (1372 aa).

This sequence belongs to the RNA polymerase beta chain family. As to quaternary structure, the RNAP catalytic core consists of 2 alpha, 1 beta, 1 beta' and 1 omega subunit. When a sigma factor is associated with the core the holoenzyme is formed, which can initiate transcription.

The enzyme catalyses RNA(n) + a ribonucleoside 5'-triphosphate = RNA(n+1) + diphosphate. In terms of biological role, DNA-dependent RNA polymerase catalyzes the transcription of DNA into RNA using the four ribonucleoside triphosphates as substrates. The chain is DNA-directed RNA polymerase subunit beta from Bradyrhizobium sp. (strain BTAi1 / ATCC BAA-1182).